The following is a 60-amino-acid chain: Cytotoxin 3 (60 aa).

Cystine bridges form between C3–C21, C14–C38, C42–C53, and C54–C59.

It belongs to the three-finger toxin family. Short-chain subfamily. Type IA cytotoxin sub-subfamily. As to quaternary structure, monomer in solution; Homodimer and oligomer in the presence of negatively charged lipids forming a pore with a size ranging between 20 and 30 Angstroms. As to expression, expressed by the venom gland.

Its subcellular location is the secreted. The protein localises to the target cell membrane. In terms of biological role, shows cytolytic activity on many different cells by forming pore in lipid membranes. In vivo, increases heart rate or kills the animal by cardiac arrest. In addition, it binds to heparin with high affinity, interacts with Kv channel-interacting protein 1 (KCNIP1) in a calcium-independent manner, and binds to integrin alpha-V/beta-3 (ITGAV/ITGB3) with moderate affinity. This Naja mossambica (Mozambique spitting cobra) protein is Cytotoxin 3.